A 320-amino-acid chain; its full sequence is Aspartate carbamoyltransferase catalytic subunit (320 aa).

Carbamoyl phosphate-binding residues include R57 and T58. K85 lines the L-aspartate pocket. Residues R107, H141, and Q144 each coordinate carbamoyl phosphate. L-aspartate is bound by residues R174 and R228. Residues G269 and P270 each contribute to the carbamoyl phosphate site.

It belongs to the aspartate/ornithine carbamoyltransferase superfamily. ATCase family. In terms of assembly, heterododecamer (2C3:3R2) of six catalytic PyrB chains organized as two trimers (C3), and six regulatory PyrI chains organized as three dimers (R2).

It carries out the reaction carbamoyl phosphate + L-aspartate = N-carbamoyl-L-aspartate + phosphate + H(+). Its pathway is pyrimidine metabolism; UMP biosynthesis via de novo pathway; (S)-dihydroorotate from bicarbonate: step 2/3. Functionally, catalyzes the condensation of carbamoyl phosphate and aspartate to form carbamoyl aspartate and inorganic phosphate, the committed step in the de novo pyrimidine nucleotide biosynthesis pathway. In Mycobacterium marinum (strain ATCC BAA-535 / M), this protein is Aspartate carbamoyltransferase catalytic subunit.